We begin with the raw amino-acid sequence, 155 residues long: Interleukin-2 (155 aa).

The first 20 residues, 1 to 20 (MYKMQLLSCIALMLVLVANS), serve as a signal peptide directing secretion. Residue threonine 24 is glycosylated (O-linked (GalNAc...) threonine). Cysteines 79 and 127 form a disulfide. Residue asparagine 112 is glycosylated (N-linked (GlcNAc...) asparagine).

It belongs to the IL-2 family.

It localises to the secreted. Its function is as follows. Cytokine produced by activated CD4-positive helper T-cells and to a lesser extend activated CD8-positive T-cells and natural killer (NK) cells that plays pivotal roles in the immune response and tolerance. Binds to a receptor complex composed of either the high-affinity trimeric IL-2R (IL2RA/CD25, IL2RB/CD122 and IL2RG/CD132) or the low-affinity dimeric IL-2R (IL2RB and IL2RG). Interaction with the receptor leads to oligomerization and conformation changes in the IL-2R subunits resulting in downstream signaling starting with phosphorylation of JAK1 and JAK3. In turn, JAK1 and JAK3 phosphorylate the receptor to form a docking site leading to the phosphorylation of several substrates including STAT5. This process leads to activation of several pathways including STAT, phosphoinositide-3-kinase/PI3K and mitogen-activated protein kinase/MAPK pathways. Functions as a T-cell growth factor and can increase NK-cell cytolytic activity as well. Promotes strong proliferation of activated B-cells and subsequently immunoglobulin production. Plays a pivotal role in regulating the adaptive immune system by controlling the survival and proliferation of regulatory T-cells, which are required for the maintenance of immune tolerance. Moreover, participates in the differentiation and homeostasis of effector T-cell subsets, including Th1, Th2, Th17 as well as memory CD8-positive T-cells. The sequence is that of Interleukin-2 (IL2) from Vulpes vulpes (Red fox).